Reading from the N-terminus, the 353-residue chain is MRTSDFKFQLPKKLISRYPNLKRSECRLLVFDRLTTKITHHFFSDLPEILNPGDLLIFNDTRVIPARLYGYSVTGKKVEILIERILNDYQAVAHIYSSELVQLGEKFILGSNLNIYIYVIKIYYSYKLFKIYFDNINYNNVLSLLNDIGHIPIPPYFHRLDEIIDYELYQTVYGSKLGSIAAPTAGLHFDTLLINRLLNLGIEISFITLHIGSATFQPVRVTLIEHHVMHDEYIEVSQSTIESILRCKERKNRVIAVGTTVVKALETAAMNTKSLSIIESFSGYSRIFIFPGYRFKIVDSLITNFHLPESTLIMLVAAFAGYRNILRVYNAAIDLNYKFLSYGDSMFITCRSE.

This sequence belongs to the QueA family. In terms of assembly, monomer.

The protein resides in the cytoplasm. The catalysed reaction is 7-aminomethyl-7-carbaguanosine(34) in tRNA + S-adenosyl-L-methionine = epoxyqueuosine(34) in tRNA + adenine + L-methionine + 2 H(+). It participates in tRNA modification; tRNA-queuosine biosynthesis. Functionally, transfers and isomerizes the ribose moiety from AdoMet to the 7-aminomethyl group of 7-deazaguanine (preQ1-tRNA) to give epoxyqueuosine (oQ-tRNA). This is S-adenosylmethionine:tRNA ribosyltransferase-isomerase from Blochmanniella floridana.